A 208-amino-acid chain; its full sequence is MSSLGRLHLITDNRPGQDPLAVVRAALSVARAELVVQVRVTDETTDRQAYDLARRVTVLCARYGATCLVNDRLHVALAVGADGGHVGADDLPVGAARAVLGSAAVLGATAREADTAVEAVAAGASYLGVGSVHPTTSKDGLPPPIGAAGLRAVAAAVSVPVIAIGGVTAADVPDLRAAGAYGVAVIAALSHAADPARATAAFVEALTC.

Residues 37-39 and Asn70 contribute to the 4-amino-2-methyl-5-(diphosphooxymethyl)pyrimidine site; that span reads QVR. Residues Asp71 and Asp90 each contribute to the Mg(2+) site. Position 109 (Thr109) interacts with 4-amino-2-methyl-5-(diphosphooxymethyl)pyrimidine. 2-[(2R,5Z)-2-carboxy-4-methylthiazol-5(2H)-ylidene]ethyl phosphate is bound at residue 135–137; that stretch reads TTS. Lys138 is a binding site for 4-amino-2-methyl-5-(diphosphooxymethyl)pyrimidine. A 2-[(2R,5Z)-2-carboxy-4-methylthiazol-5(2H)-ylidene]ethyl phosphate-binding site is contributed by Gly166.

The protein belongs to the thiamine-phosphate synthase family. Mg(2+) serves as cofactor.

The enzyme catalyses 2-[(2R,5Z)-2-carboxy-4-methylthiazol-5(2H)-ylidene]ethyl phosphate + 4-amino-2-methyl-5-(diphosphooxymethyl)pyrimidine + 2 H(+) = thiamine phosphate + CO2 + diphosphate. It catalyses the reaction 2-(2-carboxy-4-methylthiazol-5-yl)ethyl phosphate + 4-amino-2-methyl-5-(diphosphooxymethyl)pyrimidine + 2 H(+) = thiamine phosphate + CO2 + diphosphate. It carries out the reaction 4-methyl-5-(2-phosphooxyethyl)-thiazole + 4-amino-2-methyl-5-(diphosphooxymethyl)pyrimidine + H(+) = thiamine phosphate + diphosphate. It functions in the pathway cofactor biosynthesis; thiamine diphosphate biosynthesis; thiamine phosphate from 4-amino-2-methyl-5-diphosphomethylpyrimidine and 4-methyl-5-(2-phosphoethyl)-thiazole: step 1/1. Condenses 4-methyl-5-(beta-hydroxyethyl)thiazole monophosphate (THZ-P) and 2-methyl-4-amino-5-hydroxymethyl pyrimidine pyrophosphate (HMP-PP) to form thiamine monophosphate (TMP). The sequence is that of Thiamine-phosphate synthase from Salinispora arenicola (strain CNS-205).